A 227-amino-acid chain; its full sequence is Ribosomal RNA large subunit methyltransferase E (227 aa).

S-adenosyl-L-methionine-binding residues include Gly-78, Trp-80, Asp-103, Asp-119, and Asp-143. Lys-183 functions as the Proton acceptor in the catalytic mechanism.

This sequence belongs to the class I-like SAM-binding methyltransferase superfamily. RNA methyltransferase RlmE family.

It is found in the cytoplasm. It catalyses the reaction uridine(2552) in 23S rRNA + S-adenosyl-L-methionine = 2'-O-methyluridine(2552) in 23S rRNA + S-adenosyl-L-homocysteine + H(+). Its function is as follows. Specifically methylates the uridine in position 2552 of 23S rRNA at the 2'-O position of the ribose in the fully assembled 50S ribosomal subunit. The protein is Ribosomal RNA large subunit methyltransferase E of Rickettsia africae (strain ESF-5).